Consider the following 157-residue polypeptide: UPF0303 protein NT01EI_1570 (157 aa).

Belongs to the UPF0303 family.

This Edwardsiella ictaluri (strain 93-146) protein is UPF0303 protein NT01EI_1570.